The following is a 439-amino-acid chain: Glutamine synthetase (439 aa).

In terms of domain architecture, GS beta-grasp spans 12 to 93 (SKIKFVQLVF…VYGFIYKDNK (82 aa)). Residues 99–439 (PRGILKRALE…EWELERYFFL (341 aa)) enclose the GS catalytic domain. Residues Glu-122 and Glu-124 each coordinate Mg(2+). ATP is bound at residue Glu-172. Residues Glu-177 and Glu-184 each coordinate Mg(2+). Gly-229 contacts L-glutamate. Position 233 (His-233) interacts with Mg(2+). Residues 235–237 (HIS) and Ser-237 each bind ATP. L-glutamate-binding residues include Arg-283, Glu-289, and Arg-301. Residues Arg-301, Arg-306, and Lys-313 each coordinate ATP. Residue Glu-318 participates in Mg(2+) binding. An L-glutamate-binding site is contributed by Arg-320.

The protein belongs to the glutamine synthetase family. As to quaternary structure, oligomer of 12 subunits arranged in the form of two hexagons. It depends on Mg(2+) as a cofactor.

It is found in the cytoplasm. It catalyses the reaction L-glutamate + NH4(+) + ATP = L-glutamine + ADP + phosphate + H(+). Functionally, probably involved in nitrogen metabolism via ammonium assimilation. Catalyzes the ATP-dependent biosynthesis of glutamine from glutamate and ammonia. The chain is Glutamine synthetase from Pyrococcus woesei.